Consider the following 404-residue polypeptide: Queuine tRNA-ribosyltransferase catalytic subunit (404 aa).

The active-site Proton acceptor is aspartate 98. Substrate-binding positions include 98–102, aspartate 152, glutamine 195, and glycine 222; that span reads DSGGF. Residues 253–259 form an RNA binding region; it reads GVGYAED. Aspartate 272 (nucleophile) is an active-site residue. The segment at 277–281 is RNA binding; important for wobble base 34 recognition; it reads TRTAR. Positions 310, 312, 315, and 347 each coordinate Zn(2+).

It belongs to the queuine tRNA-ribosyltransferase family. In terms of assembly, heterodimer of a catalytic subunit and an accessory subunit. Zn(2+) is required as a cofactor.

The protein localises to the cytoplasm. It is found in the nucleus. The enzyme catalyses guanosine(34) in tRNA + queuine = queuosine(34) in tRNA + guanine. Functionally, catalytic subunit of the queuine tRNA-ribosyltransferase (TGT) that catalyzes the base-exchange of a guanine (G) residue with queuine (Q) at position 34 (anticodon wobble position) in tRNAs with GU(N) anticodons (tRNA-Asp, -Asn, -His and -Tyr), resulting in the hypermodified nucleoside queuosine (7-(((4,5-cis-dihydroxy-2-cyclopenten-1-yl)amino)methyl)-7-deazaguanosine). Catalysis occurs through a double-displacement mechanism. The nucleophile active site attacks the C1' of nucleotide 34 to detach the guanine base from the RNA, forming a covalent enzyme-RNA intermediate. The proton acceptor active site deprotonates the incoming queuine, allowing a nucleophilic attack on the C1' of the ribose to form the product. The chain is Queuine tRNA-ribosyltransferase catalytic subunit from Schizosaccharomyces pombe (strain 972 / ATCC 24843) (Fission yeast).